A 199-amino-acid chain; its full sequence is Small ribosomal subunit protein uS4 (199 aa).

One can recognise an S4 RNA-binding domain in the interval 94–157 (SRLDNIVYRM…QNVPTILASI (64 aa)).

It belongs to the universal ribosomal protein uS4 family. Part of the 30S ribosomal subunit. Contacts protein S5. The interaction surface between S4 and S5 is involved in control of translational fidelity.

In terms of biological role, one of the primary rRNA binding proteins, it binds directly to 16S rRNA where it nucleates assembly of the body of the 30S subunit. Its function is as follows. With S5 and S12 plays an important role in translational accuracy. The protein is Small ribosomal subunit protein uS4 of Mycoplasma mobile (strain ATCC 43663 / 163K / NCTC 11711) (Mesomycoplasma mobile).